Here is a 217-residue protein sequence, read N- to C-terminus: Insulin-like growth factor 2.S (217 aa).

A signal peptide spans 1-56; sequence MEQLSCKHRSSSVEAEAQLCRQTESRSTQLPRMSVMRHLFLLSITFLVYTLDSAKA. Positions 57 to 83 are b; it reads YRATETLCGGELVDTLQFVCGDRGFYF. Intrachain disulfides connect cysteine 64–cysteine 103, cysteine 76–cysteine 116, and cysteine 102–cysteine 107. A c region spans residues 84–96; it reads STNNGRSNRRPNR. The interval 97–117 is a; it reads GIVDVCCFKSCDLELLETYCA. A d region spans residues 118–123; the sequence is KPTKNE. The propeptide at 124–217 is e peptide; it reads RDVSTAPATA…LQQASEPSHN (94 aa).

Belongs to the insulin family.

Its subcellular location is the secreted. The insulin-like growth factors, isolated from plasma, are structurally and functionally related to insulin but have a much higher growth-promoting activity. Promotes anterior neural development. Acts as a ligand for integrin which is required for IGF2 signaling. The protein is Insulin-like growth factor 2.S of Xenopus laevis (African clawed frog).